A 200-amino-acid polypeptide reads, in one-letter code: TATA-box-binding protein (200 aa).

Tandem repeats lie at residues 25–101 (LQNI…ARII) and 115–192 (IQNI…YPVL).

This sequence belongs to the TBP family. In terms of assembly, belongs to the TFIID complex together with the TBP-associated factors (TAFs). Binds DNA as monomer.

It is found in the nucleus. General transcription factor that functions at the core of the DNA-binding multiprotein factor TFIID. Binding of TFIID to the TATA box is the initial transcriptional step of the pre-initiation complex (PIC), playing a role in the activation of eukaryotic genes transcribed by RNA polymerase II. The protein is TATA-box-binding protein of Mesembryanthemum crystallinum (Common ice plant).